Reading from the N-terminus, the 240-residue chain is tRNA1(Val) (adenine(37)-N6)-methyltransferase (240 aa).

The protein belongs to the methyltransferase superfamily. tRNA (adenine-N(6)-)-methyltransferase family.

It is found in the cytoplasm. It carries out the reaction adenosine(37) in tRNA1(Val) + S-adenosyl-L-methionine = N(6)-methyladenosine(37) in tRNA1(Val) + S-adenosyl-L-homocysteine + H(+). Its function is as follows. Specifically methylates the adenine in position 37 of tRNA(1)(Val) (anticodon cmo5UAC). This Vibrio cholerae serotype O1 (strain ATCC 39315 / El Tor Inaba N16961) protein is tRNA1(Val) (adenine(37)-N6)-methyltransferase.